Reading from the N-terminus, the 335-residue chain is Anthranilate phosphoribosyltransferase (335 aa).

5-phospho-alpha-D-ribose 1-diphosphate is bound by residues Gly-79, 82-83, Thr-87, 89-92, 107-115, and Ala-119; these read GD, NIST, and KHGNRSASS. Gly-79 contacts anthranilate. Residue Ser-91 coordinates Mg(2+). Asn-110 serves as a coordination point for anthranilate. Residue Arg-165 coordinates anthranilate. Mg(2+) is bound by residues Asp-224 and Glu-225.

Belongs to the anthranilate phosphoribosyltransferase family. As to quaternary structure, homodimer. Mg(2+) serves as cofactor.

It carries out the reaction N-(5-phospho-beta-D-ribosyl)anthranilate + diphosphate = 5-phospho-alpha-D-ribose 1-diphosphate + anthranilate. The protein operates within amino-acid biosynthesis; L-tryptophan biosynthesis; L-tryptophan from chorismate: step 2/5. Functionally, catalyzes the transfer of the phosphoribosyl group of 5-phosphorylribose-1-pyrophosphate (PRPP) to anthranilate to yield N-(5'-phosphoribosyl)-anthranilate (PRA). The protein is Anthranilate phosphoribosyltransferase of Methanobrevibacter smithii (strain ATCC 35061 / DSM 861 / OCM 144 / PS).